A 195-amino-acid polypeptide reads, in one-letter code: Small ribosomal subunit protein eS1 (195 aa).

It belongs to the eukaryotic ribosomal protein eS1 family.

This chain is Small ribosomal subunit protein eS1, found in Methanothermobacter thermautotrophicus (strain ATCC 29096 / DSM 1053 / JCM 10044 / NBRC 100330 / Delta H) (Methanobacterium thermoautotrophicum).